The chain runs to 532 residues: MTSTVAHGAGSAGPADDVEPMSARTYQVRTYGCQMNVHDSERMAGLLEAAGYRRAAEGTDADVVVFNTCAVRENADNKLYGNLSHLAPRKRTSPDMQIAVGGCLAQKDRDALLRKAPWVDVVFGTHNIGSLPALLDRARHNRVAQVEIAEALQQFPSSLPSARESAYAAWVSISVGCNNTCTFCIVPSLRGKEIDRSPADILAEVQSLVDTGVVEITLLGQNVNAYGVSFADPALPRNRGAFAELLRACGDIDGLERVRFTSPHPAEFTDDVIEAMAQTPNVCPALHMPLQSGSDRVLRAMRRSYRAERYLGIIERVRAAMPHAAITTDLIVGFPGETEQDFAATLDVVRQARFSAAFTFQYSKRPGTPAAELDGQLPKAVVQERYERLVELQEQISLEGNRAIVGQRVELLVATGEGRKDTLTARMSGRARDGRLVHFRAGDGPVRPGDIVTVEVTDAAPHHLIADGGILAHRRTRAGDAHADGQTVRGIGLGMPGIGRPVVPVAAEATSCGSAGGCGSADGAGSSAGDPQ.

The segment at 1 to 21 (MTSTVAHGAGSAGPADDVEPM) is disordered. Positions 24–140 (RTYQVRTYGC…LPALLDRARH (117 aa)) constitute an MTTase N-terminal domain. [4Fe-4S] cluster-binding residues include Cys33, Cys69, Cys103, Cys177, Cys181, and Cys184. A Radical SAM core domain is found at 163 to 399 (RESAYAAWVS…VELQEQISLE (237 aa)). Residues 402 to 470 (RAIVGQRVEL…PHHLIADGGI (69 aa)) form the TRAM domain. Residues 510-532 (TSCGSAGGCGSADGAGSSAGDPQ) form a disordered region. A compositionally biased stretch (low complexity) spans 523–532 (GAGSSAGDPQ).

This sequence belongs to the methylthiotransferase family. MiaB subfamily. In terms of assembly, monomer. It depends on [4Fe-4S] cluster as a cofactor.

It is found in the cytoplasm. The enzyme catalyses N(6)-dimethylallyladenosine(37) in tRNA + (sulfur carrier)-SH + AH2 + 2 S-adenosyl-L-methionine = 2-methylsulfanyl-N(6)-dimethylallyladenosine(37) in tRNA + (sulfur carrier)-H + 5'-deoxyadenosine + L-methionine + A + S-adenosyl-L-homocysteine + 2 H(+). Functionally, catalyzes the methylthiolation of N6-(dimethylallyl)adenosine (i(6)A), leading to the formation of 2-methylthio-N6-(dimethylallyl)adenosine (ms(2)i(6)A) at position 37 in tRNAs that read codons beginning with uridine. This is tRNA-2-methylthio-N(6)-dimethylallyladenosine synthase from Mycobacterium ulcerans (strain Agy99).